We begin with the raw amino-acid sequence, 411 residues long: Elongation factor Tu, apicoplast (411 aa).

Positions 10–214 (KPHVNIGTIG…TVDSYIEKPE (205 aa)) constitute a tr-type G domain. The interval 19–26 (GHVDHGKT) is G1. Residue 19–26 (GHVDHGKT) coordinates GTP. T26 is a Mg(2+) binding site. Positions 61–65 (GITIN) are G2. The G3 stretch occupies residues 82 to 85 (DCPG). GTP contacts are provided by residues 82-86 (DCPGH) and 137-140 (NKED). The tract at residues 137–140 (NKED) is G4. The segment at 175-177 (SAL) is G5.

The protein belongs to the TRAFAC class translation factor GTPase superfamily. Classic translation factor GTPase family. EF-Tu/EF-1A subfamily.

It is found in the plastid. Its subcellular location is the apicoplast. It catalyses the reaction GTP + H2O = GDP + phosphate + H(+). In terms of biological role, GTP hydrolase that promotes the GTP-dependent binding of aminoacyl-tRNA to the A-site of ribosomes during protein biosynthesis. This is Elongation factor Tu, apicoplast (tufA) from Theileria parva (East coast fever infection agent).